Here is an 81-residue protein sequence, read N- to C-terminus: Cytotoxin 3a (81 aa).

Positions 1–21 (MKTLLLTLVVVTIVCLDLGYT) are cleaved as a signal peptide. Cystine bridges form between cysteine 24–cysteine 42, cysteine 35–cysteine 59, cysteine 63–cysteine 74, and cysteine 75–cysteine 80.

This sequence belongs to the three-finger toxin family. Short-chain subfamily. Type IA cytotoxin sub-subfamily. Monomer in solution; Homodimer and oligomer in the presence of negatively charged lipids forming a pore with a size ranging between 20 and 30 Angstroms. As to expression, expressed by the venom gland.

It localises to the secreted. It is found in the target cell membrane. Its function is as follows. Shows cytolytic activity on many different cells by forming pore in lipid membranes. In vivo, increases heart rate or kills the animal by cardiac arrest. In addition, it binds to heparin with high affinity, interacts with Kv channel-interacting protein 1 (KCNIP1) in a calcium-independent manner, and binds to integrin alpha-V/beta-3 (ITGAV/ITGB3) with moderate affinity. This Naja atra (Chinese cobra) protein is Cytotoxin 3a.